The primary structure comprises 132 residues: Translation initiation factor 5A (132 aa).

K36 carries the post-translational modification Hypusine.

The protein belongs to the eIF-5A family.

It localises to the cytoplasm. Its function is as follows. Functions by promoting the formation of the first peptide bond. This is Translation initiation factor 5A (eIF5A) from Pyrobaculum islandicum (strain DSM 4184 / JCM 9189 / GEO3).